A 103-amino-acid polypeptide reads, in one-letter code: Small ribosomal subunit protein uS10 (103 aa).

Belongs to the universal ribosomal protein uS10 family. Part of the 30S ribosomal subunit.

Involved in the binding of tRNA to the ribosomes. The protein is Small ribosomal subunit protein uS10 of Picrophilus torridus (strain ATCC 700027 / DSM 9790 / JCM 10055 / NBRC 100828 / KAW 2/3).